Here is a 504-residue protein sequence, read N- to C-terminus: Protoporphyrinogen oxidase, mitochondrial (504 aa).

Residues 20-25 (GAGVSG), 43-44 (EA), Lys51, and 65-68 (GANT) each bind FAD. A disordered region spans residues 213–232 (SPKNEKKQGPPKTSANKKRQ). Residues Val264 and 473–475 (LSV) contribute to the FAD site.

It belongs to the protoporphyrinogen/coproporphyrinogen oxidase family. Protoporphyrinogen oxidase subfamily. It depends on FAD as a cofactor.

The protein resides in the mitochondrion. The enzyme catalyses protoporphyrinogen IX + 3 O2 = protoporphyrin IX + 3 H2O2. The protein operates within porphyrin-containing compound metabolism; protoporphyrin-IX biosynthesis; protoporphyrin-IX from protoporphyrinogen-IX: step 1/1. Its activity is regulated as follows. Inhibited by the herbicide acifluorfen. In terms of biological role, catalyzes the 6-electron oxidation of protoporphyrinogen-IX to form protoporphyrin-IX. Its function is as follows. Provides precursor for the mitochondrial and plastidic heme synthesis and the predominant chlorophyll synthesis in plastids. This is Protoporphyrinogen oxidase, mitochondrial (PPXII) from Nicotiana tabacum (Common tobacco).